We begin with the raw amino-acid sequence, 397 residues long: Tryptophan synthase beta chain (397 aa).

Lys-88 is subject to N6-(pyridoxal phosphate)lysine.

Belongs to the TrpB family. Tetramer of two alpha and two beta chains. Pyridoxal 5'-phosphate is required as a cofactor.

It catalyses the reaction (1S,2R)-1-C-(indol-3-yl)glycerol 3-phosphate + L-serine = D-glyceraldehyde 3-phosphate + L-tryptophan + H2O. The protein operates within amino-acid biosynthesis; L-tryptophan biosynthesis; L-tryptophan from chorismate: step 5/5. Functionally, the beta subunit is responsible for the synthesis of L-tryptophan from indole and L-serine. The polypeptide is Tryptophan synthase beta chain (Shewanella amazonensis (strain ATCC BAA-1098 / SB2B)).